The primary structure comprises 31 residues: uncharacterized protein (31 aa).

This is an uncharacterized protein from Chlamydia phage 1 (Bacteriophage Chp1).